Consider the following 385-residue polypeptide: Succinyl-diaminopimelate desuccinylase (385 aa).

Position 78 (His-78) interacts with Zn(2+). Asp-80 is an active-site residue. Asp-110 contributes to the Zn(2+) binding site. The active-site Proton acceptor is Glu-144. 3 residues coordinate Zn(2+): Glu-145, Glu-173, and His-358.

This sequence belongs to the peptidase M20A family. DapE subfamily. Homodimer. Zn(2+) is required as a cofactor. Co(2+) serves as cofactor.

It catalyses the reaction N-succinyl-(2S,6S)-2,6-diaminopimelate + H2O = (2S,6S)-2,6-diaminopimelate + succinate. It functions in the pathway amino-acid biosynthesis; L-lysine biosynthesis via DAP pathway; LL-2,6-diaminopimelate from (S)-tetrahydrodipicolinate (succinylase route): step 3/3. In terms of biological role, catalyzes the hydrolysis of N-succinyl-L,L-diaminopimelic acid (SDAP), forming succinate and LL-2,6-diaminopimelate (DAP), an intermediate involved in the bacterial biosynthesis of lysine and meso-diaminopimelic acid, an essential component of bacterial cell walls. In Gluconacetobacter diazotrophicus (strain ATCC 49037 / DSM 5601 / CCUG 37298 / CIP 103539 / LMG 7603 / PAl5), this protein is Succinyl-diaminopimelate desuccinylase.